A 424-amino-acid polypeptide reads, in one-letter code: Transcription regulator spe-44 (424 aa).

The region spanning 65–150 (PLQITIPEGD…RTHMEAMTID (86 aa)) is the SAND domain. 2 disordered regions span residues 178-228 (ARKS…KPRQ) and 371-394 (EHSV…AREF). Residues 192 to 210 (YEIENEMAGKEADNDDNRK) show a composition bias toward basic and acidic residues. Polar residues predominate over residues 378–388 (PRTSSSSQESL).

The protein resides in the chromosome. It localises to the nucleus. In terms of biological role, transcription factor which controls spermatogenesis and sperm cell fate by regulation of sperm gene expression. This Caenorhabditis elegans protein is Transcription regulator spe-44.